The chain runs to 294 residues: 4-hydroxybenzoate octaprenyltransferase (294 aa).

8 consecutive transmembrane segments (helical) span residues 20–42 (LLRI…ALWL), 98–118 (WEAV…VVLF), 120–140 (NTLT…YPFM), 145–165 (HLPQ…AWAA), 175–195 (WLLF…YAMV), 218–238 (AIIA…GQRA), 242–262 (SFYY…QYLA), and 274–294 (FLNN…DLAF).

Belongs to the UbiA prenyltransferase family. The cofactor is Mg(2+).

It localises to the cell inner membrane. It catalyses the reaction all-trans-octaprenyl diphosphate + 4-hydroxybenzoate = 4-hydroxy-3-(all-trans-octaprenyl)benzoate + diphosphate. It functions in the pathway cofactor biosynthesis; ubiquinone biosynthesis. In terms of biological role, catalyzes the prenylation of para-hydroxybenzoate (PHB) with an all-trans polyprenyl group. Mediates the second step in the final reaction sequence of ubiquinone-8 (UQ-8) biosynthesis, which is the condensation of the polyisoprenoid side chain with PHB, generating the first membrane-bound Q intermediate 3-octaprenyl-4-hydroxybenzoate. This chain is 4-hydroxybenzoate octaprenyltransferase, found in Marinobacter nauticus (strain ATCC 700491 / DSM 11845 / VT8) (Marinobacter aquaeolei).